The sequence spans 287 residues: Nucleotide-binding protein Asuc_0930 (287 aa).

8 to 15 (GRSGAGKS) serves as a coordination point for ATP. 56-59 (DIRN) provides a ligand contact to GTP.

The protein belongs to the RapZ-like family.

Its function is as follows. Displays ATPase and GTPase activities. This chain is Nucleotide-binding protein Asuc_0930, found in Actinobacillus succinogenes (strain ATCC 55618 / DSM 22257 / CCUG 43843 / 130Z).